The primary structure comprises 191 residues: CASP-like protein 4C3 (191 aa).

Topologically, residues 1–29 (METGDSAVKSSQDVHYYGKSTAQKHRRSN) are cytoplasmic. A helical membrane pass occupies residues 30-50 (GIILIFRALTFSFSLTSVIVM). The Extracellular segment spans residues 51–72 (GTNRHRIDAQSRVAWYDFDPFR). The helical transmembrane segment at 73–93 (YVLAVNAIICIYSFVEIWLAV) threads the bilayer. Residues 94-116 (YTYLKDTLFLPETFQVWFDYGHD) are Cytoplasmic-facing. The helical transmembrane segment at 117–137 (QGFAYLLFSANSAGIAMAQLL) threads the bilayer. Topologically, residues 138–162 (QSGNSLIHGAYRCSDAGVFCTQARA) are extracellular. The chain crosses the membrane as a helical span at residues 163–183 (SIGLGFGAFLFLALSSLLTGL). Topologically, residues 184-191 (RVARWYFS) are cytoplasmic.

This sequence belongs to the Casparian strip membrane proteins (CASP) family. In terms of assembly, homodimer and heterodimers.

The protein resides in the cell membrane. This is CASP-like protein 4C3 from Physcomitrium patens (Spreading-leaved earth moss).